The sequence spans 682 residues: Methionine--tRNA ligase (682 aa).

The 'HIGH' region motif lies at 15–25; sequence PYANGAIHLGH. Cysteine 146, cysteine 149, cysteine 159, and cysteine 162 together coordinate Zn(2+). Residues 331 to 335 carry the 'KMSKS' region motif; sequence KMSKS. Lysine 334 provides a ligand contact to ATP. The tRNA-binding domain occupies 580 to 682; that stretch reads DFAKLDMRVA…NGVTAGMQVK (103 aa).

This sequence belongs to the class-I aminoacyl-tRNA synthetase family. MetG type 1 subfamily. As to quaternary structure, homodimer. It depends on Zn(2+) as a cofactor.

It localises to the cytoplasm. The enzyme catalyses tRNA(Met) + L-methionine + ATP = L-methionyl-tRNA(Met) + AMP + diphosphate. Functionally, is required not only for elongation of protein synthesis but also for the initiation of all mRNA translation through initiator tRNA(fMet) aminoacylation. This chain is Methionine--tRNA ligase, found in Haemophilus influenzae (strain PittGG).